The chain runs to 333 residues: Ketol-acid reductoisomerase (NADP(+)) (333 aa).

The region spanning M1–T179 is the KARI N-terminal Rossmann domain. NADP(+)-binding positions include Y22–Q25, K45, S48, S50, and D80–Q83. The active site involves H105. Residue G131 participates in NADP(+) binding. A KARI C-terminal knotted domain is found at T180 to V325. D188, E192, E224, and E228 together coordinate Mg(2+). S249 is a binding site for substrate.

This sequence belongs to the ketol-acid reductoisomerase family. Mg(2+) is required as a cofactor.

The enzyme catalyses (2R)-2,3-dihydroxy-3-methylbutanoate + NADP(+) = (2S)-2-acetolactate + NADPH + H(+). It carries out the reaction (2R,3R)-2,3-dihydroxy-3-methylpentanoate + NADP(+) = (S)-2-ethyl-2-hydroxy-3-oxobutanoate + NADPH + H(+). It functions in the pathway amino-acid biosynthesis; L-isoleucine biosynthesis; L-isoleucine from 2-oxobutanoate: step 2/4. The protein operates within amino-acid biosynthesis; L-valine biosynthesis; L-valine from pyruvate: step 2/4. In terms of biological role, involved in the biosynthesis of branched-chain amino acids (BCAA). Catalyzes an alkyl-migration followed by a ketol-acid reduction of (S)-2-acetolactate (S2AL) to yield (R)-2,3-dihydroxy-isovalerate. In the isomerase reaction, S2AL is rearranged via a Mg-dependent methyl migration to produce 3-hydroxy-3-methyl-2-ketobutyrate (HMKB). In the reductase reaction, this 2-ketoacid undergoes a metal-dependent reduction by NADPH to yield (R)-2,3-dihydroxy-isovalerate. This is Ketol-acid reductoisomerase (NADP(+)) from Mycobacterium avium (strain 104).